Reading from the N-terminus, the 214-residue chain is Large ribosomal subunit protein uL3 (214 aa).

N5-methylglutamine is present on glutamine 155.

Belongs to the universal ribosomal protein uL3 family. Part of the 50S ribosomal subunit. Forms a cluster with proteins L14 and L19. In terms of processing, methylated by PrmB.

In terms of biological role, one of the primary rRNA binding proteins, it binds directly near the 3'-end of the 23S rRNA, where it nucleates assembly of the 50S subunit. The sequence is that of Large ribosomal subunit protein uL3 from Acinetobacter baumannii (strain ACICU).